The primary structure comprises 46 residues: MNLKTFCFFLLGIFVTLTVTVIPIANADAEADTFRGPCLKIKGYKC.

Residues 1 to 20 form the signal peptide; that stretch reads MNLKTFCFFLLGIFVTLTVT. Residues 21-33 constitute a propeptide that is removed on maturation; it reads VIPIANADAEADT.

Post-translationally, contains 1 disulfide bond. As to expression, expressed by the venom gland.

The protein resides in the secreted. This is U-myrmeciitoxin(01)-Mg6a from Myrmecia gulosa (Red bulldog ant).